The following is a 338-amino-acid chain: Glycerol-3-phosphate dehydrogenase [NAD(P)+] (338 aa).

Positions 13, 14, and 108 each coordinate NADPH. Sn-glycerol 3-phosphate-binding residues include K108, G139, and S141. Position 143 (A143) interacts with NADPH. Sn-glycerol 3-phosphate-binding residues include K194, D247, S257, R258, and N259. Catalysis depends on K194, which acts as the Proton acceptor. R258 is an NADPH binding site. Residues V282 and E284 each coordinate NADPH.

This sequence belongs to the NAD-dependent glycerol-3-phosphate dehydrogenase family.

Its subcellular location is the cytoplasm. It carries out the reaction sn-glycerol 3-phosphate + NAD(+) = dihydroxyacetone phosphate + NADH + H(+). The catalysed reaction is sn-glycerol 3-phosphate + NADP(+) = dihydroxyacetone phosphate + NADPH + H(+). The protein operates within membrane lipid metabolism; glycerophospholipid metabolism. In terms of biological role, catalyzes the reduction of the glycolytic intermediate dihydroxyacetone phosphate (DHAP) to sn-glycerol 3-phosphate (G3P), the key precursor for phospholipid synthesis. This is Glycerol-3-phosphate dehydrogenase [NAD(P)+] from Streptococcus pyogenes serotype M2 (strain MGAS10270).